The sequence spans 395 residues: MGIKQLYQVISENAPDAIKAGDIKNHFGRKVAIDASMSIYSFLIAVRSEGQQLMSDTGETTSHLMGMFYRTLRMVDNGIKPLYVFDGAPPKLKSGELAKRTARKTEATEAHEEAKETGTAEDVEKFSRRTVRVTREHNAECKKLLKLMGIPYIDAPTEAEAQCAVLARAGKVYAAASEDMDTLCFEAPILLRHLTFSEQRKEPIQEIHLSRALEGLDMDRAKFIDLCILLGCDYLEPIPKVGPNTALKLIRDHGSLEKVVEYIQNDPKKKYVIPEDWPYQDARELFLHPDVRDANDPECDFKWEAPDIEGLVEFLVKDKGFNEDRVRNGAARLQKNLKTAQQSRLEGFFKPVARSDEEKATLKRKHDEKLQEQKKRKKEEAKAKKEAKARPRGAG.

The N-domain stretch occupies residues 1–104; that stretch reads MGIKQLYQVI…GELAKRTARK (104 aa). Position 34 (D34) interacts with Mg(2+). Residues R47 and R70 each coordinate DNA. D86 is a binding site for Mg(2+). The disordered stretch occupies residues 96–121; sequence ELAKRTARKTEATEAHEEAKETGTAE. The segment at 122–253 is I-domain; that stretch reads DVEKFSRRTV…NTALKLIRDH (132 aa). Mg(2+) contacts are provided by E158, E160, D179, and D181. Residue E158 participates in DNA binding. 2 residues coordinate DNA: G231 and D233. D233 is a binding site for Mg(2+). Residues 341 to 349 form an interaction with PCNA region; the sequence is QQSRLEGFF. Positions 348–395 are disordered; that stretch reads FFKPVARSDEEKATLKRKHDEKLQEQKKRKKEEAKAKKEAKARPRGAG. Basic and acidic residues predominate over residues 353–389; it reads ARSDEEKATLKRKHDEKLQEQKKRKKEEAKAKKEAKA.

Belongs to the XPG/RAD2 endonuclease family. FEN1 subfamily. Interacts with PCNA. Three molecules of fen1 bind to one PCNA trimer with each molecule binding to one PCNA monomer. PCNA stimulates the nuclease activity without altering cleavage specificity. Requires Mg(2+) as cofactor. Phosphorylated. Phosphorylation upon DNA damage induces relocalization to the nuclear plasma.

The protein localises to the nucleus. Its subcellular location is the nucleolus. It is found in the nucleoplasm. The protein resides in the mitochondrion. Functionally, structure-specific nuclease with 5'-flap endonuclease and 5'-3' exonuclease activities involved in DNA replication and repair. During DNA replication, cleaves the 5'-overhanging flap structure that is generated by displacement synthesis when DNA polymerase encounters the 5'-end of a downstream Okazaki fragment. It enters the flap from the 5'-end and then tracks to cleave the flap base, leaving a nick for ligation. Also involved in the long patch base excision repair (LP-BER) pathway, by cleaving within the apurinic/apyrimidinic (AP) site-terminated flap. Acts as a genome stabilization factor that prevents flaps from equilibrating into structures that lead to duplications and deletions. Also possesses 5'-3' exonuclease activity on nicked or gapped double-stranded DNA, and exhibits RNase H activity. Also involved in replication and repair of rDNA and in repairing mitochondrial DNA. This Aspergillus terreus (strain NIH 2624 / FGSC A1156) protein is Flap endonuclease 1 (fen1).